We begin with the raw amino-acid sequence, 328 residues long: Probable tRNA pseudouridine synthase B (328 aa).

Asp71 acts as the Nucleophile in catalysis. In terms of domain architecture, PUA spans 238–313 (LPKIWVRDSA…LVARVDRVIM (76 aa)).

Belongs to the pseudouridine synthase TruB family. Type 2 subfamily.

The enzyme catalyses uridine(55) in tRNA = pseudouridine(55) in tRNA. Could be responsible for synthesis of pseudouridine from uracil-55 in the psi GC loop of transfer RNAs. This is Probable tRNA pseudouridine synthase B from Pyrobaculum islandicum (strain DSM 4184 / JCM 9189 / GEO3).